Reading from the N-terminus, the 147-residue chain is Large ribosomal subunit protein bL9 (147 aa).

The protein belongs to the bacterial ribosomal protein bL9 family.

In terms of biological role, binds to the 23S rRNA. In Clostridium botulinum (strain ATCC 19397 / Type A), this protein is Large ribosomal subunit protein bL9.